The sequence spans 347 residues: Holliday junction branch migration complex subunit RuvB (347 aa).

Residues 1–186 (MKDENSISFL…FGITARFELY (186 aa)) form a large ATPase domain (RuvB-L) region. ATP contacts are provided by residues leucine 25, arginine 26, glycine 67, lysine 70, threonine 71, threonine 72, 133-135 (EDY), arginine 176, tyrosine 186, and arginine 223. Residue threonine 71 participates in Mg(2+) binding. The segment at 187–257 (SEIELVEIIK…IVSIGLEMLR (71 aa)) is small ATPAse domain (RuvB-S). Residues 260–347 (GEGLDEQDRN…GLNENQRVSF (88 aa)) form a head domain (RuvB-H) region. The DNA site is built by arginine 315 and arginine 320.

This sequence belongs to the RuvB family. Homohexamer. Forms an RuvA(8)-RuvB(12)-Holliday junction (HJ) complex. HJ DNA is sandwiched between 2 RuvA tetramers; dsDNA enters through RuvA and exits via RuvB. An RuvB hexamer assembles on each DNA strand where it exits the tetramer. Each RuvB hexamer is contacted by two RuvA subunits (via domain III) on 2 adjacent RuvB subunits; this complex drives branch migration. In the full resolvosome a probable DNA-RuvA(4)-RuvB(12)-RuvC(2) complex forms which resolves the HJ.

The protein localises to the cytoplasm. It catalyses the reaction ATP + H2O = ADP + phosphate + H(+). Its function is as follows. The RuvA-RuvB-RuvC complex processes Holliday junction (HJ) DNA during genetic recombination and DNA repair, while the RuvA-RuvB complex plays an important role in the rescue of blocked DNA replication forks via replication fork reversal (RFR). RuvA specifically binds to HJ cruciform DNA, conferring on it an open structure. The RuvB hexamer acts as an ATP-dependent pump, pulling dsDNA into and through the RuvAB complex. RuvB forms 2 homohexamers on either side of HJ DNA bound by 1 or 2 RuvA tetramers; 4 subunits per hexamer contact DNA at a time. Coordinated motions by a converter formed by DNA-disengaged RuvB subunits stimulates ATP hydrolysis and nucleotide exchange. Immobilization of the converter enables RuvB to convert the ATP-contained energy into a lever motion, pulling 2 nucleotides of DNA out of the RuvA tetramer per ATP hydrolyzed, thus driving DNA branch migration. The RuvB motors rotate together with the DNA substrate, which together with the progressing nucleotide cycle form the mechanistic basis for DNA recombination by continuous HJ branch migration. Branch migration allows RuvC to scan DNA until it finds its consensus sequence, where it cleaves and resolves cruciform DNA. In Borreliella burgdorferi (strain ATCC 35210 / DSM 4680 / CIP 102532 / B31) (Borrelia burgdorferi), this protein is Holliday junction branch migration complex subunit RuvB.